Here is a 548-residue protein sequence, read N- to C-terminus: Sulochrin halogenase gedL (548 aa).

Gly14, Ala17, and Glu47 together coordinate FAD. Chloride is bound by residues Ser333 and Gly334. Val335 serves as a coordination point for FAD.

The protein belongs to the flavin-dependent halogenase family.

It catalyses the reaction sulochrin + 2 FADH2 + 2 chloride + 2 O2 = dihydrogeodin + 2 FAD + 4 H2O + H(+). It functions in the pathway secondary metabolite biosynthesis. Sulochrin halogenase; part of the gene cluster that mediates the biosynthesis of geodin, an intermediate in the biosynthesis of other natural products. The pathway begins with the synthesis of atrochrysone thioester by the polyketide synthase (PKS) gedC. The atrochrysone carboxyl ACP thioesterase gedB then breaks the thioester bond and releases the atrochrysone carboxylic acid from gedC. The atrochrysone carboxylic acid is then converted to atrochrysone which is further transformed into emodinanthrone. The next step is performed by the emodinanthrone oxygenase gedH that catalyzes the oxidation of emodinanthrone to emodin. Emodin O-methyltransferase encoded probably by gedA then catalyzes methylation of the 8-hydroxy group of emodin to form questin. Ring cleavage of questin by questin oxidase gedK leads to desmethylsulochrin via several intermediates including questin epoxide. Another methylation step probably catalyzed by methyltransferase gedG leads to the formation of sulochrin which is further converted to dihydrogeodin by the sulochrin halogenase gedL. Finally, the dihydrogeodin oxidase gedJ catalyzes the stereospecific phenol oxidative coupling reaction converting dihydrogeodin to geodin. The chain is Sulochrin halogenase gedL from Aspergillus terreus (strain NIH 2624 / FGSC A1156).